The following is a 183-amino-acid chain: Negative modulator of initiation of replication (183 aa).

Positions 43 to 70 (VNDTQPVSAPAPSKAAPSAGNESRPQDR) are disordered. The span at 50–61 (SAPAPSKAAPSA) shows a compositional bias: low complexity. Interaction with DNA stretches follow at residues 89-90 (AV), 118-122 (RTRIY), and 152-158 (NTNTGRK).

Belongs to the SeqA family. As to quaternary structure, homodimer. Polymerizes to form helical filaments.

It is found in the cytoplasm. Its function is as follows. Negative regulator of replication initiation, which contributes to regulation of DNA replication and ensures that replication initiation occurs exactly once per chromosome per cell cycle. Binds to pairs of hemimethylated GATC sequences in the oriC region, thus preventing assembly of replication proteins and re-initiation at newly replicated origins. Repression is relieved when the region becomes fully methylated. The protein is Negative modulator of initiation of replication of Pantoea ananatis (strain AJ13355).